The primary structure comprises 237 residues: Probable transcriptional regulatory protein NIS_0560 (237 aa).

This sequence belongs to the TACO1 family.

It localises to the cytoplasm. This Nitratiruptor sp. (strain SB155-2) protein is Probable transcriptional regulatory protein NIS_0560.